Consider the following 217-residue polypeptide: Mucosal pentraxin (217 aa).

An N-terminal signal peptide occupies residues 1–19; the sequence is MEKLLLGVLLLAFLPEGMT. The Pentraxin (PTX) domain maps to 24 to 217; sequence RGKVFIFPEQ…KGYVVVKPKL (194 aa). A disulfide bridge connects residues Cys55 and Cys114. 6 residues coordinate Ca(2+): Asp77, Asn78, Glu155, Gln156, Asp157, and Gln167.

It belongs to the pentraxin family. As to quaternary structure, homopentamer. Pentraxin (or pentaxin) have a discoid arrangement of 5 non-covalently bound subunits. Ca(2+) is required as a cofactor.

It is found in the secreted. This chain is Mucosal pentraxin (MPTX), found in Bos taurus (Bovine).